We begin with the raw amino-acid sequence, 412 residues long: Probable ribonuclease FAU-1 (412 aa).

This sequence belongs to the FAU-1 family.

Functionally, probable RNase involved in rRNA stability through maturation and/or degradation of precursor rRNAs. Binds to RNA in loop regions with AU-rich sequences. The chain is Probable ribonuclease FAU-1 from Sulfurisphaera tokodaii (strain DSM 16993 / JCM 10545 / NBRC 100140 / 7) (Sulfolobus tokodaii).